A 510-amino-acid polypeptide reads, in one-letter code: Lysine--tRNA ligase (510 aa).

The Mg(2+) site is built by Glu420 and Glu427.

This sequence belongs to the class-II aminoacyl-tRNA synthetase family. In terms of assembly, homodimer. Mg(2+) serves as cofactor.

The protein resides in the cytoplasm. The catalysed reaction is tRNA(Lys) + L-lysine + ATP = L-lysyl-tRNA(Lys) + AMP + diphosphate. The polypeptide is Lysine--tRNA ligase (Ralstonia nicotianae (strain ATCC BAA-1114 / GMI1000) (Ralstonia solanacearum)).